Here is a 372-residue protein sequence, read N- to C-terminus: uncharacterized protein (372 aa).

The 233-residue stretch at 38-270 (FFIEGGGTKG…ANNIPLDYLI (233 aa)) folds into the PNPLA domain. The short motif at 42–47 (GGGTKG) is the GXGXXG element. Positions 74-78 (GTSVG) match the GXSXG motif. Residue Ser76 is the Nucleophile of the active site. Asp257 (proton acceptor) is an active-site residue. Residues 257–259 (DGG) carry the DGA/G motif.

In terms of biological role, probable lipid hydrolase. This is an uncharacterized protein from Acanthamoeba polyphaga (Amoeba).